A 154-amino-acid chain; its full sequence is Myoglobin (154 aa).

The region spanning 2 to 148 is the Globin domain; the sequence is GLSDGEWQLV…FRNDMAAKYK (147 aa). Position 4 is a phosphoserine (serine 4). Residue histidine 65 participates in nitrite binding. An O2-binding site is contributed by histidine 65. Threonine 68 bears the Phosphothreonine mark. Residue histidine 94 participates in heme b binding.

It belongs to the globin family. As to quaternary structure, monomeric.

It localises to the cytoplasm. The protein resides in the sarcoplasm. It catalyses the reaction Fe(III)-heme b-[protein] + nitric oxide + H2O = Fe(II)-heme b-[protein] + nitrite + 2 H(+). It carries out the reaction H2O2 + AH2 = A + 2 H2O. Its function is as follows. Monomeric heme protein which primary function is to store oxygen and facilitate its diffusion within muscle tissues. Reversibly binds oxygen through a pentacoordinated heme iron and enables its timely and efficient release as needed during periods of heightened demand. Depending on the oxidative conditions of tissues and cells, and in addition to its ability to bind oxygen, it also has a nitrite reductase activity whereby it regulates the production of bioactive nitric oxide. Under stress conditions, like hypoxia and anoxia, it also protects cells against reactive oxygen species thanks to its pseudoperoxidase activity. In Sus scrofa (Pig), this protein is Myoglobin (MB).